Reading from the N-terminus, the 572-residue chain is Protein 5NUC (572 aa).

Positions 1–25 are cleaved as a signal peptide; the sequence is MLFFLNFFVLVFSIELALLTASAAA. Positions 39 and 41 each coordinate Zn(2+). A disulfide bond links cysteine 54 and cysteine 64. Asparagine 82 carries N-linked (GlcNAc...) asparagine glycosylation. Residues aspartate 93, asparagine 125, histidine 227, and histidine 250 each contribute to the Zn(2+) site. A disulfide bridge links cysteine 360 with cysteine 365. Residues arginine 361, glutamine 399, arginine 404, and phenylalanine 427 each coordinate substrate. N-linked (GlcNAc...) asparagine glycosylation is found at asparagine 454 and asparagine 490. A disulfide bond links cysteine 488 and cysteine 491. 512–518 is a substrate binding site; the sequence is FMKDGGD.

The protein belongs to the 5'-nucleotidase family. The cofactor is Zn(2+).

It carries out the reaction UDP-sugar + H2O = UMP + alpha-D-aldose 1-phosphate.. It catalyses the reaction a ribonucleoside 5'-phosphate + H2O = a ribonucleoside + phosphate. Its function is as follows. Degradation of external UDP-glucose to uridine monophosphate and glucose-1-phosphate, which can then be used by the cell. The protein is Protein 5NUC (5NUC) of Lutzomyia longipalpis (Sand fly).